Consider the following 171-residue polypeptide: UPF0763 protein KHP_0657 (171 aa).

This sequence belongs to the UPF0763 family.

The sequence is that of UPF0763 protein KHP_0657 from Helicobacter pylori (strain 51).